Here is a 389-residue protein sequence, read N- to C-terminus: Cytochrome f (389 aa).

The first 42 residues, 1–42 (MTTFFISKVNGPVNKSLIWLKIHIYEFFLLKFMLLFPPTVCS), serve as a signal peptide directing secretion. Tyr-105, Cys-125, Cys-128, and His-129 together coordinate heme. The helical transmembrane segment at 355–375 (LQALIVFFIFVILTQLFLVLK) threads the bilayer.

It belongs to the cytochrome f family. The 4 large subunits of the cytochrome b6-f complex are cytochrome b6, subunit IV (17 kDa polypeptide, petD), cytochrome f and the Rieske protein, while the 4 small subunits are PetG, PetL, PetM and PetN. The complex functions as a dimer. Heme is required as a cofactor.

Its subcellular location is the plastid. It is found in the chloroplast thylakoid membrane. Its function is as follows. Component of the cytochrome b6-f complex, which mediates electron transfer between photosystem II (PSII) and photosystem I (PSI), cyclic electron flow around PSI, and state transitions. This Pleurastrum terricola (Filamentous green alga) protein is Cytochrome f.